We begin with the raw amino-acid sequence, 175 residues long: Large ribosomal subunit protein bL17 (175 aa).

The interval 124 to 175 (VKKSKPTAPAQAVATKPAVEETREAAAAQPQEPEVEISEVKDPAEECEAKAD) is disordered. The span at 161–175 (SEVKDPAEECEAKAD) shows a compositional bias: basic and acidic residues.

It belongs to the bacterial ribosomal protein bL17 family. Part of the 50S ribosomal subunit. Contacts protein L32.

The protein is Large ribosomal subunit protein bL17 of Geobacter sulfurreducens (strain ATCC 51573 / DSM 12127 / PCA).